The primary structure comprises 221 residues: Cytidylate kinase 1 (221 aa).

7-15 (GPSASGKSS) contacts ATP.

The protein belongs to the cytidylate kinase family. Type 1 subfamily.

It localises to the cytoplasm. The enzyme catalyses CMP + ATP = CDP + ADP. It catalyses the reaction dCMP + ATP = dCDP + ADP. This Borrelia garinii subsp. bavariensis (strain ATCC BAA-2496 / DSM 23469 / PBi) (Borreliella bavariensis) protein is Cytidylate kinase 1.